The following is a 128-amino-acid chain: UPF0102 protein RPB_0420 (128 aa).

It belongs to the UPF0102 family.

The protein is UPF0102 protein RPB_0420 of Rhodopseudomonas palustris (strain HaA2).